A 361-amino-acid chain; its full sequence is MQYARAAVMVEQNRVETWEVPIFDPAPGGALVRVVLGGVCGSDVHIVSGEAGAMPFPIILGHEGIGRIEKLGTGVTTDYAGVPVKQGDMVYWAPIALCHRCHSCTVLDETPWDNSTFFEHAQKPNWGSYADFACLPNGMAFYRLPDHAQPEALAALGCALPTVLRGYDRCGPVGLDDTVVVQGAGPVGLAAVLVAAASGAKDIIAIDHSPIRLDMARSLGATETISLADTTPEERQRIVQERFGKRGASLVVEAAGALPAFPEGVNLTGNHGRYVILGLWGAIGTQPISPRDLTIKNMSIAGATFPKPKHYYQAMQLAARLQDRYPLADLITQRFSIDEASKALELVKAGALIKPVIDSTL.

Positions 40, 62, 98, 101, 104, and 170 each coordinate Zn(2+).

Belongs to the zinc-containing alcohol dehydrogenase family. Zn(2+) is required as a cofactor.

It catalyses the reaction (1R,4R,5R)-5-hydroxycamphor + NAD(+) = (1R,4R)-bornane-2,5-dione + NADH + H(+). Its pathway is terpene metabolism; (R)-camphor degradation. This Pseudomonas putida (Arthrobacter siderocapsulatus) protein is 5-exo-hydroxycamphor dehydrogenase (camD).